The primary structure comprises 166 residues: NADPH-dependent 7-cyano-7-deazaguanine reductase (166 aa).

The active-site Thioimide intermediate is Cys57. Asp64 (proton donor) is an active-site residue. Residues 79–81 (VES) and 98–99 (HE) contribute to the substrate site.

Belongs to the GTP cyclohydrolase I family. QueF type 1 subfamily.

The protein resides in the cytoplasm. The catalysed reaction is 7-aminomethyl-7-carbaguanine + 2 NADP(+) = 7-cyano-7-deazaguanine + 2 NADPH + 3 H(+). It participates in tRNA modification; tRNA-queuosine biosynthesis. Catalyzes the NADPH-dependent reduction of 7-cyano-7-deazaguanine (preQ0) to 7-aminomethyl-7-deazaguanine (preQ1). This Staphylococcus epidermidis (strain ATCC 35984 / DSM 28319 / BCRC 17069 / CCUG 31568 / BM 3577 / RP62A) protein is NADPH-dependent 7-cyano-7-deazaguanine reductase.